A 165-amino-acid chain; its full sequence is Protein SprT (165 aa).

The SprT-like domain occupies 19 to 163; the sequence is REKLAQANLK…RCVKCGEPLV (145 aa). Zn(2+) is bound at residue His-78. Residue Glu-79 is part of the active site. His-82 is a Zn(2+) binding site.

It belongs to the SprT family. It depends on Zn(2+) as a cofactor.

It is found in the cytoplasm. This Enterobacter sp. (strain 638) protein is Protein SprT.